Here is a 252-residue protein sequence, read N- to C-terminus: Triosephosphate isomerase (252 aa).

Substrate is bound at residue 10–12 (NWK). Histidine 96 (electrophile) is an active-site residue. The active-site Proton acceptor is glutamate 168. Substrate contacts are provided by residues glycine 174, serine 214, and 235–236 (GG).

Belongs to the triosephosphate isomerase family. In terms of assembly, homodimer.

The protein resides in the cytoplasm. The catalysed reaction is D-glyceraldehyde 3-phosphate = dihydroxyacetone phosphate. It functions in the pathway carbohydrate biosynthesis; gluconeogenesis. The protein operates within carbohydrate degradation; glycolysis; D-glyceraldehyde 3-phosphate from glycerone phosphate: step 1/1. In terms of biological role, involved in the gluconeogenesis. Catalyzes stereospecifically the conversion of dihydroxyacetone phosphate (DHAP) to D-glyceraldehyde-3-phosphate (G3P). This Streptococcus thermophilus (strain CNRZ 1066) protein is Triosephosphate isomerase.